We begin with the raw amino-acid sequence, 631 residues long: Coiled-coil domain-containing protein 93 (631 aa).

Disordered regions lie at residues methionine 1–glutamine 23 and glutamine 214–aspartate 243. Residues methionine 1–aspartate 430 are sufficient for interaction with CCDC22. The span at serine 215–threonine 225 shows a compositional bias: basic and acidic residues. Serine 298, serine 301, and serine 305 each carry phosphoserine. Residues leucine 309 to serine 631 are a coiled coil. The segment covering leucine 421–threonine 433 has biased composition (basic and acidic residues). The tract at residues leucine 421 to methionine 447 is disordered. Residues threonine 448–serine 631 form a sufficient for interaction with WASHC2C region.

It belongs to the CCDC93 family. As to quaternary structure, component of the commander complex consisting of the CCC subcomplex and the retriever subcomplex. Component of the CCC (COMMD/CCDC22/CCDC93) subcomplex consisting of COMMD1, COMMD2, COMMD3, COMMD4, COMMD5, COMMD6, COMMD7, COMMD8, COMMD9, COMMD10, CCDC22 and CCDC93. Forms a coiled-coil heterodimer with CCDC22; this heterodimer interacts with the guanine nucleotide exchange factor DENND10; the interaction is direct. Interacts with WASHC1. Interacts directly with WASHC2C. Interacts with SNX17 and SNX31.

It localises to the early endosome. Component of the commander complex that is essential for endosomal recycling of transmembrane cargos; the commander complex is composed of composed of the CCC subcomplex and the retriever subcomplex. Component of the CCC complex, which is involved in the regulation of endosomal recycling of surface proteins, including integrins, signaling receptor and channels. The CCC complex associates with SNX17, retriever and WASH complexes to prevent lysosomal degradation and promote cell surface recycling of numerous cargos such as integrins ITGA5:ITGB1. Involved in copper-dependent ATP7A trafficking between the trans-Golgi network and vesicles in the cell periphery; the function is proposed to depend on its association within the CCC complex and cooperation with the WASH complex on early endosomes and is dependent on its interaction with WASHC2C. Its function is as follows. (Microbial infection) The CCC complex, in collaboration with the heterotrimeric retriever complex, mediates the exit of human papillomavirus to the cell surface. The polypeptide is Coiled-coil domain-containing protein 93 (CCDC93) (Homo sapiens (Human)).